A 396-amino-acid polypeptide reads, in one-letter code: Purine ribonucleoside efflux pump NepI (396 aa).

The Cytoplasmic portion of the chain corresponds to 1 to 21 (MSEFIAENRGADAITRPNWSA). Residues 22–42 (VFSVAFCVACLIIVEFLPVSL) traverse the membrane as a helical segment. Residues 43–54 (LTPMAQDLGISE) are Periplasmic-facing. Residues 55–75 (GVAGQSVTVTAFVAMFASLFI) form a helical membrane-spanning segment. Residues 76 to 85 (TQTIQATDRR) lie on the Cytoplasmic side of the membrane. Residues 86–106 (YVVILFAVLLTLSCLLVSFAN) traverse the membrane as a helical segment. Ser107 is a topological domain (periplasmic). A helical membrane pass occupies residues 108–128 (FSLLLIGRACLGLALGGFWAM). At 129–147 (SASLTMRLVPPRTVPKALS) the chain is on the cytoplasmic side. A helical membrane pass occupies residues 148–168 (VIFGAVSIALVIAAPLGCFLG). At 169-175 (ELIGWRN) the chain is on the periplasmic side. Residues 176–196 (VFNAAAAMGVLCIFWIIKSLP) form a helical membrane-spanning segment. Over 197-215 (SLPGEPSHQKQNTFRLLQR) the chain is Cytoplasmic. The chain crosses the membrane as a helical span at residues 216 to 236 (PGVMAGMIAIFMSFAGQFAFF). Residues 237–255 (TYIRPVYMTLAGFGVDGLT) lie on the Periplasmic side of the membrane. A helical membrane pass occupies residues 256–276 (LVLLSFGIASFVGTSLSSFIL). Residues 277-281 (KRSVK) are Cytoplasmic-facing. A helical transmembrane segment spans residues 282-302 (LALAGAPFVLALSALVLTLWG). At 303 to 305 (SDK) the chain is on the periplasmic side. A helical transmembrane segment spans residues 306 to 326 (IVATGVAIIWGLTFALIPVGW). Topologically, residues 327-343 (STWITRSLADQAEKAGS) are cytoplasmic. The helical transmembrane segment at 344-364 (IQVAVIQLANTCGAAIGGYAL) threads the bilayer. The Periplasmic segment spans residues 365-366 (DN). The chain crosses the membrane as a helical span at residues 367–387 (IGLTSPLMLSGTLMLLTALLV). The Cytoplasmic segment spans residues 388-396 (TAKVKMKKS).

The protein belongs to the major facilitator superfamily. DHA1 family. NepI (TC 2.A.1.2.26) subfamily.

The protein resides in the cell inner membrane. The enzyme catalyses inosine(in) + H(+)(out) = inosine(out) + H(+)(in). The catalysed reaction is guanosine(in) + H(+)(out) = guanosine(out) + H(+)(in). Involved in the efflux of purine ribonucleosides, such as inosine and guanosine. In Escherichia coli O157:H7, this protein is Purine ribonucleoside efflux pump NepI.